Reading from the N-terminus, the 1799-residue chain is 1,3-beta-glucan synthase component FKS1 (1799 aa).

Residues 1–11 are compositionally biased toward pro residues; that stretch reads MSYPNPPPPPK. Positions 1–136 are disordered; it reads MSYPNPPPPP…SNAGHRPRDP (136 aa). Residues 12-23 are compositionally biased toward low complexity; the sequence is GSASFSSSSSDP. Over residues 51–64 the composition is skewed to gly residues; sequence GAGGAGVAPPGQGG. The segment covering 91 to 101 has biased composition (polar residues); sequence ASESGWSQNEP. Transmembrane regions (helical) follow at residues 431 to 451, 470 to 490, 504 to 524, 530 to 550, 591 to 611, 648 to 668, 1268 to 1288, 1323 to 1343, 1422 to 1442, 1446 to 1466, 1527 to 1547, 1563 to 1583, 1605 to 1625, 1635 to 1655, 1704 to 1724, and 1762 to 1782; these read IWVL…PSIY, LGGF…FSYI, LIFL…IAFF, VALI…IAFA, FLLW…FLTL, VMFV…YVIW, NILV…LGTL, CIIS…VQEL, LVLL…YFWI, GLCV…DFII, IGEI…YLFI, IAII…TLFL, ALAH…LWFL, LGII…IAVF, DFIA…IPYF, and GLLY…PIIF.

It belongs to the glycosyltransferase 48 family. As to quaternary structure, component of the 1,3-beta-glucan synthase (GS) complex composed of a catalytic subunit FKS1 and a regulatory subunit RHO1.

The protein resides in the cell membrane. It carries out the reaction [(1-&gt;3)-beta-D-glucosyl](n) + UDP-alpha-D-glucose = [(1-&gt;3)-beta-D-glucosyl](n+1) + UDP + H(+). Activated by magnesium ions. Inhibited by caspofungin and cilofungin. Catalytic subunit of the 1,3-beta-glucan synthase (GS) complex. Synthesizes 1,3-beta-glucan, a major structural component of the yeast cell wall. Involved in cell wall synthesis, maintenance and remodeling. The chain is 1,3-beta-glucan synthase component FKS1 from Cryptococcus neoformans var. grubii serotype A (strain H99 / ATCC 208821 / CBS 10515 / FGSC 9487) (Filobasidiella neoformans var. grubii).